We begin with the raw amino-acid sequence, 215 residues long: Myelin protein zero-like protein 2 (215 aa).

The signal sequence occupies residues 1–26 (MYGKSPTRAVLFLLGLQLTALWPTAA). Positions 27–141 (VEIYTPRVLE…DGLIGEIQLS (115 aa)) constitute an Ig-like V-type domain. Residues 27-154 (VEIYTPRVLE…TVRFSEIHFL (128 aa)) are Extracellular-facing. N-linked (GlcNAc...) asparagine glycosylation is found at N39 and N118. A disulfide bridge links C47 with C123. Residues 155 to 175 (ALAIGSACALMVIIVIVVVLF) traverse the membrane as a helical segment. Residues 176-215 (QHFRKKRRAERAHRVVEIKSKEEEKLNQEKKASVSLEYTD) lie on the Cytoplasmic side of the membrane.

Belongs to the myelin P0 protein family.

The protein localises to the membrane. Mediates homophilic cell-cell adhesion. The sequence is that of Myelin protein zero-like protein 2 (MPZL2) from Bos taurus (Bovine).